We begin with the raw amino-acid sequence, 208 residues long: UPF0637 protein BCB4264_A4063 (208 aa).

This sequence belongs to the UPF0637 family.

The sequence is that of UPF0637 protein BCB4264_A4063 from Bacillus cereus (strain B4264).